Reading from the N-terminus, the 618-residue chain is Manganese lipoxygenase (618 aa).

The N-terminal stretch at Met-1–Ala-16 is a signal peptide. Residues Ser-36 to Thr-45 are compositionally biased toward low complexity. The segment at Ser-36 to Ala-58 is disordered. Residues Gln-46–Ala-58 show a composition bias toward polar residues. A Lipoxygenase domain is found at Tyr-47–Ser-617. Residues Asn-60, Asn-91, Asn-106, Asn-116, and Asn-157 are each glycosylated (N-linked (GlcNAc...) asparagine). Residues His-290, His-294, His-478, and Asn-482 each contribute to the Mn(2+) site. Asn-513 carries an N-linked (GlcNAc...) asparagine glycan. Val-618 provides a ligand contact to Mn(2+).

Belongs to the lipoxygenase family. Mn(2+) is required as a cofactor. Post-translationally, N- and O-glycosylated.

It is found in the secreted. The enzyme catalyses (9Z,12Z)-octadecadienoate + O2 = (11S)-hydroperoxy-(9Z,12Z)-octadecadienoate. It catalyses the reaction (9Z,12Z)-octadecadienoate + O2 = (13R)-hydroperoxy-(9Z,11E)-octadecadienoate. The catalysed reaction is (9Z,12Z,15Z)-octadecatrienoate + O2 = (11S)-hydroperoxy-(9Z,12Z,15Z)-octadecatrienoate. It carries out the reaction (9Z,12Z,15Z)-octadecatrienoate + O2 = (13R)-hydroperoxy-(9Z,11E,15Z)-octadecatrienoate. Lipoxygenase that metabolizes linoleic and alpha-linolenic acids to 11S- and 13R-hydroperoxy fatty acids. At the end of lipoxygenation, the intermediate product 11S-HPODE from linoleic acid is then transformed into 13R-HPODE as the final product. It also acts on alpha-linolenic acid producing 11S-HPOTrE and 13R-HPOTrE with subsequent transformation of 11S-HPOTrE to 13R-HPOTrE as the final product. Gamma-linolenic acid is a poor substrate. Oleate and arachidonate are not substrates. This is Manganese lipoxygenase from Gaeumannomyces tritici (Wheat and barley take-all root rot fungus).